The sequence spans 566 residues: MPPQVARNLLRAARARAVFQSTRPAHRRPAAISCRFQSTEAVRQTPSDVYQAPPRGFVPRKEEKFVPTQSRKAAPAATLKLNSKNLSSLQNVSVPTYKRHGVKQGIVHVGVGGFHRAHLAAYVDTLLEQFNVQDWSICGVDLQPFAAPMRDALKPQDNLYTMIERAADGTSARVIGSITDYLFAPDSAEAVIAKMAHPDTHIVSMTVTESGYYMNENTHELQIDHPDVAADLAGEQPARTVFGYLYAAMARRHAAGLRPFTVLSCDNMQKNGDISRNMLVSFARHAGNNEVADWIASNGAFPNSMVDRITPRTNDEDKVSLAKNFGVEDAWPVVTEPFHQWVLEDKFVDGRPPFEKAGVQIVPDVHQVEEYEMIKLRLLNGSHSAMGYAGQLAGFTYIHEVISHPVYRQFVINMMQQEVKPLLPQIPGVSVDDYCNTLLGRFSNPTLKDELPRICLGGSGKIPQFIMPSIAEQIIAGGPLRRLTLVAAAWFRYNKGIDDAGNAFKVDDPMVEELQAKAAEGPIAQLQIKNLFGDDLRQDKRFVQELKTALEGLEREGALAMIEKYA.

Position 106–117 (106–117) interacts with NAD(+); sequence IVHVGVGGFHRA.

The protein belongs to the mannitol dehydrogenase family. Monomer.

The catalysed reaction is D-mannitol + NAD(+) = D-fructose + NADH + H(+). Functionally, catalyzes the NAD(H)-dependent interconversion of D-fructose and D-mannitol in the mannitol metabolic pathway. The sequence is that of Mannitol 2-dehydrogenase from Pyrenophora tritici-repentis (strain Pt-1C-BFP) (Wheat tan spot fungus).